The primary structure comprises 352 residues: Zinc finger CCCH domain-containing protein 42 (352 aa).

An RRM domain is found at 36-114; the sequence is AYVYVGGIPF…RTIKVDHCGA (79 aa). 2 consecutive C3H1-type zinc fingers follow at residues 130-157 and 180-207; these read REAR…HDEK and REGR…HDEK. The segment at 156–179 is disordered; sequence EKRAANTGWGHEEDRSSKWDHDKN. 3 stretches are compositionally biased toward basic and acidic residues: residues 210-230, 243-296, and 304-352; these read ATTG…DKLN, GDFK…RSGR, and RHND…DRRR. Residues 210–352 form a disordered region; the sequence is ATTGWGHEED…DSLRREDRRR (143 aa). A coiled-coil region spans residues 319–348; that stretch reads RAQDWEKRKAESRRDRNDREEKDRDSLRRE.

In Arabidopsis thaliana (Mouse-ear cress), this protein is Zinc finger CCCH domain-containing protein 42.